Consider the following 441-residue polypeptide: tRNA modification GTPase MnmE (441 aa).

3 residues coordinate (6S)-5-formyl-5,6,7,8-tetrahydrofolate: arginine 23, glutamate 81, and arginine 121. Residues 219–366 (GFTVVLAGAP…LLDAIQAAAE (148 aa)) enclose the TrmE-type G domain. GTP-binding positions include 229 to 234 (NSGKST), 248 to 254 (SDSPGTT), and 273 to 276 (DTAG). Serine 233 and threonine 254 together coordinate Mg(2+). Lysine 441 provides a ligand contact to (6S)-5-formyl-5,6,7,8-tetrahydrofolate.

This sequence belongs to the TRAFAC class TrmE-Era-EngA-EngB-Septin-like GTPase superfamily. TrmE GTPase family. As to quaternary structure, homodimer. Heterotetramer of two MnmE and two MnmG subunits. The cofactor is K(+).

The protein localises to the cytoplasm. Functionally, exhibits a very high intrinsic GTPase hydrolysis rate. Involved in the addition of a carboxymethylaminomethyl (cmnm) group at the wobble position (U34) of certain tRNAs, forming tRNA-cmnm(5)s(2)U34. This is tRNA modification GTPase MnmE from Methylobacterium radiotolerans (strain ATCC 27329 / DSM 1819 / JCM 2831 / NBRC 15690 / NCIMB 10815 / 0-1).